Reading from the N-terminus, the 293-residue chain is Movement protein BC1 (293 aa).

Belongs to the begomovirus movement protein BC1 family. Binds to dimeric supercoiled plasmid DNA. Phosphorylated.

The protein resides in the host cell membrane. It is found in the host microsome membrane. Its subcellular location is the host endoplasmic reticulum membrane. Functionally, transports viral genome to neighboring plant cells directly through plasmosdesmata, without any budding. The movement protein allows efficient cell to cell propagation, by bypassing the host cell wall barrier. Begomovirus genome is shuttled out of nucleus by Nuclear shuttle protein (NSP) and the movement protein transports the DNA-NSP complex to cell plasmodesmata and facilitates further movement across the cell wall. The polypeptide is Movement protein BC1 (Cucurbita moschata (Winter crookneck squash)).